The primary structure comprises 59 residues: Preprotein translocase subunit SecG (59 aa).

The Cytoplasmic portion of the chain corresponds to 1 to 35 (MPSSKKKKEDVPIASMAGLVRYYESEKEKVKISPK). A helical membrane pass occupies residues 36 to 56 (VVVVASIVLIAGVIIASFIIP). The Extracellular portion of the chain corresponds to 57–59 (PPL).

This sequence belongs to the SEC61-beta family. In terms of assembly, component of the protein translocase complex. Heterotrimer consisting of alpha (SecY), beta (SecG) and gamma (SecE) subunits. Can form oligomers of the heterotrimer.

It is found in the cell membrane. Functionally, involved in protein export. The function of the beta subunit is unknown, but it may be involved in stabilization of the trimeric complex. This is Preprotein translocase subunit SecG from Sulfolobus acidocaldarius (strain ATCC 33909 / DSM 639 / JCM 8929 / NBRC 15157 / NCIMB 11770).